A 496-amino-acid chain; its full sequence is Glutamyl-tRNA(Gln) amidotransferase subunit A (496 aa).

Catalysis depends on charge relay system residues Lys-75 and Ser-150. The active-site Acyl-ester intermediate is the Ser-174.

Belongs to the amidase family. GatA subfamily. As to quaternary structure, heterotrimer of A, B and C subunits.

The enzyme catalyses L-glutamyl-tRNA(Gln) + L-glutamine + ATP + H2O = L-glutaminyl-tRNA(Gln) + L-glutamate + ADP + phosphate + H(+). In terms of biological role, allows the formation of correctly charged Gln-tRNA(Gln) through the transamidation of misacylated Glu-tRNA(Gln) in organisms which lack glutaminyl-tRNA synthetase. The reaction takes place in the presence of glutamine and ATP through an activated gamma-phospho-Glu-tRNA(Gln). This Burkholderia ambifaria (strain MC40-6) protein is Glutamyl-tRNA(Gln) amidotransferase subunit A.